The sequence spans 414 residues: Chaperone protein dnaJ 39 (414 aa).

The span at 1-24 (MATHSSRSENKDAGEEDELRRRNP) shows a compositional bias: basic and acidic residues. Positions 1-36 (MATHSSRSENKDAGEEDELRRRNPYEVLGIPSNSTD) are disordered. Residues 23 to 88 (NPYEVLGIPS…ENRRLYDTTG (66 aa)) enclose the J domain. Residues 296 to 324 (EKESLRSTEAQIVSKRTELLKFEAEYHEV) adopt a coiled-coil conformation. Residues 362 to 395 (TKQGSSKSRSWSKKKSSLLMEPREEGEVAVREEG) form a disordered region. Positions 382–395 (EPREEGEVAVREEG) are enriched in basic and acidic residues.

The protein belongs to the DnaJ family. C/III subfamily. As to expression, expressed constitutively at low levels in seedlings, roots, leaves, stems, flowers and siliques.

It is found in the membrane. Plays a continuous role in plant development probably in the structural organization of compartments. Seems to be involved in early gravitropic signal transduction within the gravity-perceiving cells (statocytes). This is Chaperone protein dnaJ 39 (ATJ39) from Arabidopsis thaliana (Mouse-ear cress).